Here is a 347-residue protein sequence, read N- to C-terminus: N6-Methyl-AMP deaminase-L (347 aa).

Zn(2+)-binding residues include His-19 and His-21. N(6)-methyl-AMP-binding positions include His-21, Asn-23, His-69, 101-104 (STPR), Asp-142, and Gly-175. His-202 serves as a coordination point for Zn(2+). N(6)-methyl-AMP-binding residues include Glu-205, Asp-283, and Asp-284. Residue Glu-205 is the Proton donor of the active site. Asp-283 serves as a coordination point for Zn(2+).

Belongs to the metallo-dependent hydrolases superfamily. Adenosine and AMP deaminases family. In terms of assembly, monomer. It depends on Zn(2+) as a cofactor.

It carries out the reaction N(6)-methyl-AMP + H2O + H(+) = IMP + methylamine. In terms of biological role, catalyzes the hydrolysis of the free cytosolic methylated adenosine nucleotide N(6)-methyl-AMP (N6-mAMP) to produce inositol monophosphate (IMP) and methylamine. Is required for the catabolism of cytosolic N6-mAMP, which is derived from the degradation of mRNA containing N6-methylated adenine (m6A). This Xenopus laevis (African clawed frog) protein is N6-Methyl-AMP deaminase-L (mapda.L).